A 131-amino-acid chain; its full sequence is Small ribosomal subunit protein uS9 (131 aa).

Residues 102–131 (AGFLTRDPRMKERRKYGLKKARKAPQFSKR) form a disordered region. Positions 112-131 (KERRKYGLKKARKAPQFSKR) are enriched in basic residues.

This sequence belongs to the universal ribosomal protein uS9 family.

This is Small ribosomal subunit protein uS9 from Desulfitobacterium hafniense (strain DSM 10664 / DCB-2).